Reading from the N-terminus, the 238-residue chain is Pyridoxine 5'-phosphate synthase (238 aa).

2 residues coordinate 3-amino-2-oxopropyl phosphate: asparagine 7 and arginine 18. The active-site Proton acceptor is the histidine 43. 2 residues coordinate 1-deoxy-D-xylulose 5-phosphate: arginine 45 and histidine 50. Catalysis depends on glutamate 70, which acts as the Proton acceptor. Threonine 100 serves as a coordination point for 1-deoxy-D-xylulose 5-phosphate. Histidine 190 serves as the catalytic Proton donor. 3-amino-2-oxopropyl phosphate is bound by residues aspartate 191 and 213-214 (GH).

Belongs to the PNP synthase family. In terms of assembly, homooctamer; tetramer of dimers.

The protein resides in the cytoplasm. It carries out the reaction 3-amino-2-oxopropyl phosphate + 1-deoxy-D-xylulose 5-phosphate = pyridoxine 5'-phosphate + phosphate + 2 H2O + H(+). It functions in the pathway cofactor biosynthesis; pyridoxine 5'-phosphate biosynthesis; pyridoxine 5'-phosphate from D-erythrose 4-phosphate: step 5/5. In terms of biological role, catalyzes the complicated ring closure reaction between the two acyclic compounds 1-deoxy-D-xylulose-5-phosphate (DXP) and 3-amino-2-oxopropyl phosphate (1-amino-acetone-3-phosphate or AAP) to form pyridoxine 5'-phosphate (PNP) and inorganic phosphate. The sequence is that of Pyridoxine 5'-phosphate synthase from Cytophaga hutchinsonii (strain ATCC 33406 / DSM 1761 / CIP 103989 / NBRC 15051 / NCIMB 9469 / D465).